A 142-amino-acid chain; its full sequence is Large ribosomal subunit protein uL13 (142 aa).

The protein belongs to the universal ribosomal protein uL13 family. As to quaternary structure, part of the 50S ribosomal subunit.

Functionally, this protein is one of the early assembly proteins of the 50S ribosomal subunit, although it is not seen to bind rRNA by itself. It is important during the early stages of 50S assembly. The protein is Large ribosomal subunit protein uL13 of Cronobacter sakazakii (strain ATCC BAA-894) (Enterobacter sakazakii).